We begin with the raw amino-acid sequence, 173 residues long: Superoxide dismutase [Cu-Zn] (173 aa).

A signal peptide spans 1–19; the sequence is MKRFSLAILALVVATGAQA. 3 residues coordinate Cu cation: H67, H69, and H92. The tract at residues 72-113 is disordered; sequence GSCQPATKDGKASAAESAGGHLDPQNTGKHEGPEGAGHLGDL. C74 and C169 are oxidised to a cystine. Residues H92, H101, H109, and D112 each contribute to the Zn(2+) site. H147 lines the Cu cation pocket.

Belongs to the Cu-Zn superoxide dismutase family. In terms of assembly, monomer. Requires Cu cation as cofactor. The cofactor is Zn(2+).

It is found in the periplasm. The enzyme catalyses 2 superoxide + 2 H(+) = H2O2 + O2. In terms of biological role, destroys radicals which are normally produced within the cells and which are toxic to biological systems. The sequence is that of Superoxide dismutase [Cu-Zn] (sodC) from Escherichia coli O157:H7.